A 214-amino-acid polypeptide reads, in one-letter code: Large ribosomal subunit protein uL3 (214 aa).

The interval phenylalanine 129–arginine 155 is disordered.

It belongs to the universal ribosomal protein uL3 family. In terms of assembly, part of the 50S ribosomal subunit. Forms a cluster with proteins L14 and L19.

One of the primary rRNA binding proteins, it binds directly near the 3'-end of the 23S rRNA, where it nucleates assembly of the 50S subunit. This is Large ribosomal subunit protein uL3 from Synechococcus sp. (strain JA-3-3Ab) (Cyanobacteria bacterium Yellowstone A-Prime).